A 227-amino-acid chain; its full sequence is UPF0758 protein lpl2409 (227 aa).

The MPN domain maps to 102 to 225; sequence RLSNTQQTYA…YSIFAENKWA (124 aa). Zn(2+)-binding residues include histidine 173, histidine 175, and aspartate 186. The short motif at 173-186 is the JAMM motif element; it reads HNHPSGLSDASQQD.

It belongs to the UPF0758 family.

This is UPF0758 protein lpl2409 from Legionella pneumophila (strain Lens).